Consider the following 251-residue polypeptide: Hydroxyacylglutathione hydrolase (251 aa).

H53, H55, D57, H58, H110, D127, and H165 together coordinate Zn(2+).

The protein belongs to the metallo-beta-lactamase superfamily. Glyoxalase II family. Monomer. It depends on Zn(2+) as a cofactor.

It catalyses the reaction an S-(2-hydroxyacyl)glutathione + H2O = a 2-hydroxy carboxylate + glutathione + H(+). It functions in the pathway secondary metabolite metabolism; methylglyoxal degradation; (R)-lactate from methylglyoxal: step 2/2. In terms of biological role, thiolesterase that catalyzes the hydrolysis of S-D-lactoyl-glutathione to form glutathione and D-lactic acid. The chain is Hydroxyacylglutathione hydrolase from Pectobacterium atrosepticum (strain SCRI 1043 / ATCC BAA-672) (Erwinia carotovora subsp. atroseptica).